We begin with the raw amino-acid sequence, 810 residues long: Leucine--tRNA ligase (810 aa).

A 'HIGH' region motif is present at residues 41–52; sequence PYPSGQGLHVGH. Positions 582 to 586 match the 'KMSKS' region motif; that stretch reads KMSKS. K585 serves as a coordination point for ATP.

The protein belongs to the class-I aminoacyl-tRNA synthetase family.

It is found in the cytoplasm. It catalyses the reaction tRNA(Leu) + L-leucine + ATP = L-leucyl-tRNA(Leu) + AMP + diphosphate. The polypeptide is Leucine--tRNA ligase (Oenococcus oeni (strain ATCC BAA-331 / PSU-1)).